The chain runs to 490 residues: Probable glycine dehydrogenase (decarboxylating) subunit 2 (490 aa).

Position 273 is an N6-(pyridoxal phosphate)lysine (Lys-273).

This sequence belongs to the GcvP family. C-terminal subunit subfamily. The glycine cleavage system is composed of four proteins: P, T, L and H. In this organism, the P 'protein' is a heterodimer of two subunits. The cofactor is pyridoxal 5'-phosphate.

It catalyses the reaction N(6)-[(R)-lipoyl]-L-lysyl-[glycine-cleavage complex H protein] + glycine + H(+) = N(6)-[(R)-S(8)-aminomethyldihydrolipoyl]-L-lysyl-[glycine-cleavage complex H protein] + CO2. The glycine cleavage system catalyzes the degradation of glycine. The P protein binds the alpha-amino group of glycine through its pyridoxal phosphate cofactor; CO(2) is released and the remaining methylamine moiety is then transferred to the lipoamide cofactor of the H protein. The sequence is that of Probable glycine dehydrogenase (decarboxylating) subunit 2 from Staphylococcus aureus (strain MRSA252).